A 529-amino-acid polypeptide reads, in one-letter code: Bifunctional purine biosynthesis protein PurH (529 aa).

The region spanning 1–148 is the MGS-like domain; it reads MQQPRPVRRA…KNHKDVAIVV (148 aa).

Belongs to the PurH family.

It carries out the reaction (6R)-10-formyltetrahydrofolate + 5-amino-1-(5-phospho-beta-D-ribosyl)imidazole-4-carboxamide = 5-formamido-1-(5-phospho-D-ribosyl)imidazole-4-carboxamide + (6S)-5,6,7,8-tetrahydrofolate. The catalysed reaction is IMP + H2O = 5-formamido-1-(5-phospho-D-ribosyl)imidazole-4-carboxamide. Its pathway is purine metabolism; IMP biosynthesis via de novo pathway; 5-formamido-1-(5-phospho-D-ribosyl)imidazole-4-carboxamide from 5-amino-1-(5-phospho-D-ribosyl)imidazole-4-carboxamide (10-formyl THF route): step 1/1. It functions in the pathway purine metabolism; IMP biosynthesis via de novo pathway; IMP from 5-formamido-1-(5-phospho-D-ribosyl)imidazole-4-carboxamide: step 1/1. The chain is Bifunctional purine biosynthesis protein PurH from Cronobacter sakazakii (strain ATCC BAA-894) (Enterobacter sakazakii).